We begin with the raw amino-acid sequence, 348 residues long: NADH-ubiquinone oxidoreductase chain 2 (348 aa).

The next 10 membrane-spanning stretches (helical) occupy residues 1-21, 25-45, 60-80, 93-115, 149-169, 177-197, 200-220, 239-259, 274-294, and 326-346; these read MSPYVTMILISSLGLGTTITF, SWLMAWMGLEINTLAITPLMV, FLTQATASGLLLFATLNNAWM, LSAPMITMALALKMGVAPMHFWL, LNTTTMTILGLTSTIIGGLGG, KVLAYSSIAHLGWMVIIIQYS, LALLNLLLYITMTSTAFLTLM, IATMTAMLALLALGGLPPLTG, NLPALATLMALSALLSLFFYL, and LAMLSIMTLMALPTTPTMVAI.

Belongs to the complex I subunit 2 family.

It is found in the mitochondrion inner membrane. The catalysed reaction is a ubiquinone + NADH + 5 H(+)(in) = a ubiquinol + NAD(+) + 4 H(+)(out). In terms of biological role, core subunit of the mitochondrial membrane respiratory chain NADH dehydrogenase (Complex I) that is believed to belong to the minimal assembly required for catalysis. Complex I functions in the transfer of electrons from NADH to the respiratory chain. The immediate electron acceptor for the enzyme is believed to be ubiquinone. In Latimeria chalumnae (Coelacanth), this protein is NADH-ubiquinone oxidoreductase chain 2 (MT-ND2).